Here is a 383-residue protein sequence, read N- to C-terminus: Putative 8-amino-7-oxononanoate synthase (383 aa).

Substrate is bound at residue arginine 22. Position 109–110 (109–110) interacts with pyridoxal 5'-phosphate; the sequence is GY. Position 134 (histidine 134) interacts with substrate. Pyridoxal 5'-phosphate-binding positions include serine 182, 207–210, and 236–239; these read DDAH and TLSK. Residue lysine 239 is modified to N6-(pyridoxal phosphate)lysine. Threonine 348 is a substrate binding site.

Belongs to the class-II pyridoxal-phosphate-dependent aminotransferase family. BioF subfamily. Homodimer. The cofactor is pyridoxal 5'-phosphate.

The catalysed reaction is 6-carboxyhexanoyl-[ACP] + L-alanine + H(+) = (8S)-8-amino-7-oxononanoate + holo-[ACP] + CO2. Its pathway is cofactor biosynthesis; biotin biosynthesis. Functionally, catalyzes the decarboxylative condensation of pimeloyl-[acyl-carrier protein] and L-alanine to produce 8-amino-7-oxononanoate (AON), [acyl-carrier protein], and carbon dioxide. In Caulobacter sp. (strain K31), this protein is Putative 8-amino-7-oxononanoate synthase (bioF).